A 212-amino-acid chain; its full sequence is Probable GTP-binding protein EngB (212 aa).

The EngB-type G domain maps to 38–210; sequence ALPQIAFVGK…KTSLAKCIKL (173 aa). GTP-binding positions include 46–53, 73–77, 91–94, 158–161, and 189–191; these read GKSNVGKS, GRTRQ, DLPG, TKSD, and VSS. Mg(2+) contacts are provided by Ser-53 and Thr-75.

Belongs to the TRAFAC class TrmE-Era-EngA-EngB-Septin-like GTPase superfamily. EngB GTPase family. Mg(2+) is required as a cofactor.

Its function is as follows. Necessary for normal cell division and for the maintenance of normal septation. In Rickettsia bellii (strain OSU 85-389), this protein is Probable GTP-binding protein EngB.